We begin with the raw amino-acid sequence, 434 residues long: F-box/LRR-repeat protein 21 (434 aa).

The F-box domain maps to 39-85 (LLDWGTLPHHVILQIFQYLPLIDRARASSVCRRWNEVFHIPDLWRKF). LRR repeat units follow at residues 187-213 (DTPV…KMSS), 214-239 (CPHV…ALNY), 242-265 (LSDE…RIDV), 322-347 (GRSV…VVCA), 349-374 (GLLP…GLSE), and 375-400 (CEVS…SIME).

As to quaternary structure, part of the SCF (SKP1-CUL1-F-box) E3 ubiquitin-protein ligase complex SCF(FBXL21) composed of CUL1, SKP1, RBX1 and FBXL21. Interacts with CRY1 and CRY2. Expressed in the hypothalamus, especially in the suprachiasmatic nucleus (SCN). Expression is driven by the core-clock. There is a pronounced diurnal and circadian expression rhythms rising rapidly at the start of the day and declining at the onset of the night.

Its subcellular location is the cytoplasm. The protein resides in the cytosol. The protein localises to the nucleus. Its pathway is protein modification; protein ubiquitination. Functionally, substrate-recognition component of the SCF(FBXL21) E3 ubiquitin ligase complex involved in circadian rhythm function. Plays a key role in the maintenance of both the speed and the robustness of the circadian clock oscillation. The SCF(FBXL21) complex mainly acts in the cytosol and mediates ubiquitination of CRY proteins (CRY1 and CRY2), leading to CRY proteins stabilization. The SCF(FBXL21) complex counteracts the activity of the SCF(FBXL3) complex and protects CRY proteins from degradation. Involved in the hypothalamic suprachiasmatic nucleus (SCN) clock regulating temporal organization of the daily activities. The polypeptide is F-box/LRR-repeat protein 21 (Fbxl21) (Mus musculus (Mouse)).